Here is a 328-residue protein sequence, read N- to C-terminus: Ribosomal RNA small subunit methyltransferase C (328 aa).

It belongs to the methyltransferase superfamily. RsmC family. In terms of assembly, monomer.

Its subcellular location is the cytoplasm. The catalysed reaction is guanosine(1207) in 16S rRNA + S-adenosyl-L-methionine = N(2)-methylguanosine(1207) in 16S rRNA + S-adenosyl-L-homocysteine + H(+). Its function is as follows. Specifically methylates the guanine in position 1207 of 16S rRNA in the 30S particle. This Pasteurella multocida (strain Pm70) protein is Ribosomal RNA small subunit methyltransferase C.